We begin with the raw amino-acid sequence, 89 residues long: Elongation factor 1-beta (89 aa).

The protein belongs to the EF-1-beta/EF-1-delta family.

Functionally, promotes the exchange of GDP for GTP in EF-1-alpha/GDP, thus allowing the regeneration of EF-1-alpha/GTP that could then be used to form the ternary complex EF-1-alpha/GTP/AAtRNA. This Methanococcus maripaludis (strain DSM 14266 / JCM 13030 / NBRC 101832 / S2 / LL) protein is Elongation factor 1-beta.